A 329-amino-acid chain; its full sequence is GTP 3',8-cyclase (329 aa).

The 227-residue stretch at 8–234 (AFARKFYYLR…QLRQRSDGPA (227 aa)) folds into the Radical SAM core domain. Arginine 17 lines the GTP pocket. 2 residues coordinate [4Fe-4S] cluster: cysteine 24 and cysteine 28. An S-adenosyl-L-methionine-binding site is contributed by tyrosine 30. Cysteine 31 lines the [4Fe-4S] cluster pocket. Arginine 68 contacts GTP. Glycine 72 is an S-adenosyl-L-methionine binding site. Threonine 99 contacts GTP. Serine 123 serves as a coordination point for S-adenosyl-L-methionine. Lysine 160 contributes to the GTP binding site. Residue methionine 194 participates in S-adenosyl-L-methionine binding. Residues cysteine 257 and cysteine 260 each contribute to the [4Fe-4S] cluster site. 262–264 (RLR) lines the GTP pocket. Cysteine 274 is a [4Fe-4S] cluster binding site.

It belongs to the radical SAM superfamily. MoaA family. Monomer and homodimer. The cofactor is [4Fe-4S] cluster.

The catalysed reaction is GTP + AH2 + S-adenosyl-L-methionine = (8S)-3',8-cyclo-7,8-dihydroguanosine 5'-triphosphate + 5'-deoxyadenosine + L-methionine + A + H(+). It functions in the pathway cofactor biosynthesis; molybdopterin biosynthesis. Catalyzes the cyclization of GTP to (8S)-3',8-cyclo-7,8-dihydroguanosine 5'-triphosphate. The polypeptide is GTP 3',8-cyclase (Shigella sonnei (strain Ss046)).